The sequence spans 137 residues: MLSPKRVKFRKRQRGRLKGTDERGSSVSFGEFGLKAVTSGRLTARQIEAARITINRQVKRGGKLWIRIFPHTPITKKPAETRMGKGKGNPEFWIAEIRPGRILFEMSGIDEETAEKALSLASYKLPIHTEFVKRSAL.

Residues 1–17 are compositionally biased toward basic residues; sequence MLSPKRVKFRKRQRGRL. A disordered region spans residues 1–24; sequence MLSPKRVKFRKRQRGRLKGTDERG.

This sequence belongs to the universal ribosomal protein uL16 family. In terms of assembly, part of the 50S ribosomal subunit.

Its function is as follows. Binds 23S rRNA and is also seen to make contacts with the A and possibly P site tRNAs. The protein is Large ribosomal subunit protein uL16 of Leptospira borgpetersenii serovar Hardjo-bovis (strain JB197).